Reading from the N-terminus, the 319-residue chain is Zinc metalloproteinase/disintegrin (319 aa).

Positions 1-28 are excised as a propeptide; the sequence is EDEAPKMCGVTQNWESYEPIKKASQSNL. The Peptidase M12B domain maps to 34 to 230; the sequence is RYIELVIVAD…QKPQCILNKP (197 aa). Residues Glu37 and Asp121 each contribute to the Ca(2+) site. 3 disulfides stabilise this stretch: Cys145-Cys225, Cys185-Cys209, and Cys187-Cys192. Residue His170 coordinates Zn(2+). Glu171 is an active-site residue. 2 residues coordinate Zn(2+): His174 and His180. Ca(2+) is bound by residues Cys225 and Asn228. A propeptide spanning residues 231–246 is cleaved from the precursor; the sequence is LRTDTVSTPVSGNELL. Residues 238 to 319 enclose the Disintegrin domain; sequence TPVSGNELLE…AGCPRNPFHA (82 aa). 6 disulfide bridges follow: Cys252–Cys267, Cys254–Cys262, Cys261–Cys284, Cys275–Cys281, Cys280–Cys305, and Cys293–Cys312. Residues 297 to 299 carry the Cell attachment site motif; sequence RGD.

This sequence belongs to the venom metalloproteinase (M12B) family. P-II subfamily. P-IIa sub-subfamily. Monomer. It depends on Zn(2+) as a cofactor. In terms of tissue distribution, expressed by the venom gland.

The protein resides in the secreted. With respect to regulation, excess of calcium ions significantly suppress the autoproteolysis of the enzyme. In terms of biological role, metalloproteinase that impairs hemostasis in the envenomed animal. Shows autoproteolysis dependent on pH and temperature. Does not show hemorrhagic activity. Functionally, inhibits platelet aggregation induced by ADP (IC(50) is 200 nM), collagen (IC(50) is 500 nM), thrombin and epinephrin (IC(50) is 300 nM). Does not inhibit aggregation induced by ristocetin. Its function is as follows. Inhibits platelet aggregation induced by ADP (IC(50) is 100 nM), collagen (IC(50) is 500 nM), thrombin and epinephrin (IC(50) is 300 nM). Does not inhibit aggregation induced by ristocetin. Significantly inhibits angiogenesis both in vivo and in vitro. This is Zinc metalloproteinase/disintegrin from Gloydius brevicauda (Korean slamosa snake).